The sequence spans 74 residues: Acyclotide phyb-K (74 aa).

A signal peptide spans 1–24 (MARVNSLKCALCFIVLILFVQLNC). Positions 25-43 (IPETRVMAVELSRVFLQTS) are excised as a propeptide. 3 disulfides stabilise this stretch: cysteine 47–cysteine 64, cysteine 51–cysteine 66, and cysteine 56–cysteine 71.

Post-translationally, contains 3 disulfide bonds. In terms of tissue distribution, expressed in midvein, lamina and periphery of leaves (at protein level).

Its function is as follows. Probably participates in a plant defense mechanism. The sequence is that of Acyclotide phyb-K from Petunia hybrida (Petunia).